A 326-amino-acid chain; its full sequence is Beta-ketoacyl-[acyl-carrier-protein] synthase III (326 aa).

Residues Cys111 and His252 contribute to the active site. Residues 253–257 (QANIR) form an ACP-binding region. The active site involves Asn282.

This sequence belongs to the thiolase-like superfamily. FabH family. Homodimer.

The protein resides in the plastid. The protein localises to the chloroplast. The enzyme catalyses malonyl-[ACP] + acetyl-CoA + H(+) = 3-oxobutanoyl-[ACP] + CO2 + CoA. The protein operates within lipid metabolism; fatty acid biosynthesis. In terms of biological role, catalyzes the condensation reaction of fatty acid synthesis by the addition to an acyl acceptor of two carbons from malonyl-ACP. Catalyzes the first condensation reaction which initiates fatty acid synthesis and may therefore play a role in governing the total rate of fatty acid production. Possesses both acetoacetyl-ACP synthase and acetyl transacylase activities. Its substrate specificity determines the biosynthesis of branched-chain and/or straight-chain of fatty acids. In Porphyra umbilicalis (Purple laver), this protein is Beta-ketoacyl-[acyl-carrier-protein] synthase III.